The following is a 234-amino-acid chain: Interleukin-34 (234 aa).

Positions 1-20 (MPQGLAWLRYLGILLGMALG) are cleaved as a signal peptide. N-linked (GlcNAc...) asparagine glycosylation is present at Asn-76. Residues 191–234 (EAPQPQPRSPASAQCEAAQLYPLPQPPSTSLPRVLGPSAGPPTQ) are disordered.

This sequence belongs to the IL-34 family. In terms of assembly, homodimer. Interacts with CSF1R.

The protein localises to the secreted. Its function is as follows. Cytokine that promotes the proliferation, survival and differentiation of monocytes and macrophages. Promotes the release of pro-inflammatory chemokines, and thereby plays an important role in innate immunity and in inflammatory processes. Plays an important role in the regulation of osteoclast proliferation and differentiation, and in the regulation of bone resorption. Signaling via CSF1R and its downstream effectors stimulates phosphorylation of MAPK1/ERK2 AND MAPK3/ERK1. This is Interleukin-34 from Bos taurus (Bovine).